The primary structure comprises 446 residues: GTPase Der (446 aa).

2 EngA-type G domains span residues 2-166 (TVVA…PEAP) and 179-354 (IRVS…RQYN). Residues 8–15 (GRPNVGKS), 55–59 (DTAGF), 118–121 (NKID), 185–192 (GRPNVGKS), 232–236 (DTAGI), and 297–300 (NKWD) each bind GTP. One can recognise a KH-like domain in the interval 355–440 (QRVTTGIVNR…PIRLIFRPRQ (86 aa)).

Belongs to the TRAFAC class TrmE-Era-EngA-EngB-Septin-like GTPase superfamily. EngA (Der) GTPase family. As to quaternary structure, associates with the 50S ribosomal subunit.

Functionally, GTPase that plays an essential role in the late steps of ribosome biogenesis. The protein is GTPase Der of Syntrophobacter fumaroxidans (strain DSM 10017 / MPOB).